The following is a 606-amino-acid chain: MRRQLSFHESTKRSLKKKKIRKIEKPSLVSKTSRDKNASITDIHEEDIEAFSDEENKIVHLNNLKEDRFQLWFEKYIPQKAADLAVHKSKISAIKQWMLTDSLESRLLLICGPSGCGKSTAVQVLAKELGYSLIEWLNPMNLKEPSNQESDTLSLTEKFSRFMSLCETYPELELMDSNNIQKRGKNAQGKKKFIFLDEIPHLSKFNGSLDAFRNVIRTALTSRGAFSIIMVLTEIQLNNLEGINSQDRNSFNSVQIMGNDLLQDPRVTVLQFNPIAPTYMKKCLGSILRKEGVPKSPKLLSLVENICSASEGDLRSAINSLQLSISQSFEKKGTKNIREVKEGKGKGNDFSLEAAQVLERLSKSDSEAYARFKNYKSAYIPKSDKNENSFFKKDVGLGMMHAIGKVVWNKREGDDEVLKASSQQTGNSERIKGVKVSKSQENKNCISLKSDQRERMLNVDQCFTSKRRSLVDIESTINQSGLSGSVFRYGLFENYVDSCVTTDEAFNVCDLLSISDCLSHDFPYSYTGDEISTWFSVQGTLFYLPSPVPRKWRQLRFQQWNNEGIVRGIFDDYMVIYGKRSVSDPVIEAHEDQVLEDIDDPIEDED.

Residues 1 to 21 (MRRQLSFHESTKRSLKKKKIR) form a disordered region. 112 to 119 (GPSGCGKS) provides a ligand contact to ATP.

This sequence belongs to the rad17/RAD24 family. As to quaternary structure, interacts with mug40.

It localises to the nucleus. Participates in checkpoint pathways arrest of the cell cycle. A mechanism that allows the DNA repair pathways to act to restore the integrity of the DNA prior to DNA synthesis or separation of the replicated chromosomes. This Schizosaccharomyces pombe (strain 972 / ATCC 24843) (Fission yeast) protein is Checkpoint protein rad17 (rad17).